The following is a 427-amino-acid chain: Glutamate-1-semialdehyde 2,1-aminomutase (427 aa).

Residue K265 is modified to N6-(pyridoxal phosphate)lysine.

The protein belongs to the class-III pyridoxal-phosphate-dependent aminotransferase family. HemL subfamily. In terms of assembly, homodimer. It depends on pyridoxal 5'-phosphate as a cofactor.

The protein resides in the cytoplasm. It carries out the reaction (S)-4-amino-5-oxopentanoate = 5-aminolevulinate. Its pathway is porphyrin-containing compound metabolism; protoporphyrin-IX biosynthesis; 5-aminolevulinate from L-glutamyl-tRNA(Glu): step 2/2. This is Glutamate-1-semialdehyde 2,1-aminomutase from Burkholderia pseudomallei (strain 668).